Consider the following 293-residue polypeptide: Small ribosomal subunit protein uS3 (293 aa).

The region spanning 39–107 (VREYLKAKLK…PVAVNIEEVR (69 aa)) is the KH type-2 domain. Residues 210–293 (RNDLPAVETP…PATAADGKGE (84 aa)) form a disordered region. The span at 219–238 (PRPEEERRPRGPRRDGRPGG) shows a compositional bias: basic and acidic residues.

Belongs to the universal ribosomal protein uS3 family. In terms of assembly, part of the 30S ribosomal subunit. Forms a tight complex with proteins S10 and S14.

Its function is as follows. Binds the lower part of the 30S subunit head. Binds mRNA in the 70S ribosome, positioning it for translation. The chain is Small ribosomal subunit protein uS3 from Paracidovorax citrulli (strain AAC00-1) (Acidovorax citrulli).